Here is a 197-residue protein sequence, read N- to C-terminus: Imidazoleglycerol-phosphate dehydratase (197 aa).

It belongs to the imidazoleglycerol-phosphate dehydratase family.

Its subcellular location is the cytoplasm. The catalysed reaction is D-erythro-1-(imidazol-4-yl)glycerol 3-phosphate = 3-(imidazol-4-yl)-2-oxopropyl phosphate + H2O. The protein operates within amino-acid biosynthesis; L-histidine biosynthesis; L-histidine from 5-phospho-alpha-D-ribose 1-diphosphate: step 6/9. The protein is Imidazoleglycerol-phosphate dehydratase of Bradyrhizobium diazoefficiens (strain JCM 10833 / BCRC 13528 / IAM 13628 / NBRC 14792 / USDA 110).